A 107-amino-acid polypeptide reads, in one-letter code: Large ribosomal subunit protein uL24 (107 aa).

This sequence belongs to the universal ribosomal protein uL24 family. Part of the 50S ribosomal subunit.

Functionally, one of two assembly initiator proteins, it binds directly to the 5'-end of the 23S rRNA, where it nucleates assembly of the 50S subunit. Its function is as follows. One of the proteins that surrounds the polypeptide exit tunnel on the outside of the subunit. The sequence is that of Large ribosomal subunit protein uL24 from Carboxydothermus hydrogenoformans (strain ATCC BAA-161 / DSM 6008 / Z-2901).